A 448-amino-acid chain; its full sequence is Beta-glucosidase A (448 aa).

Glu166 functions as the Proton donor in the catalytic mechanism. Glu355 (nucleophile) is an active-site residue.

This sequence belongs to the glycosyl hydrolase 1 family.

It catalyses the reaction Hydrolysis of terminal, non-reducing beta-D-glucosyl residues with release of beta-D-glucose.. It participates in glycan metabolism; cellulose degradation. The protein is Beta-glucosidase A (bglA) of Acetivibrio thermocellus (strain ATCC 27405 / DSM 1237 / JCM 9322 / NBRC 103400 / NCIMB 10682 / NRRL B-4536 / VPI 7372) (Clostridium thermocellum).